Here is a 1962-residue protein sequence, read N- to C-terminus: MALMSNKTAIESILGNFEKKHVDAIYNAAAQTILSHSEFRNKHFAYSLNSYQKKIASKVGIELYPNGYLPHSHPLSKIFENHLLFDVLPGVVNTSRLVMCSIKESKVLVFKGIRDKSRRQVSDLNALNSLNNSHTSFINRLVASKDVSRYTEEADAFFQSKKGSPELFSRNFIKSLENKEAVFFHDEVHHWTKAQMFSFLKSTKVKRFIFTVVYPPEILKKFANSQNPKVYDFKVDKGRLFFFPDGVKTEAYEQKLNMEWLFSASHLRSGDCVWTVTRHKSIYAHHLFEISIGELVTDSKLFFSDYNSIDMSKIFLDRFRSYEVFPISIEHLYKVYSYLLCLKKPDLESGLAKLRQIIGDDVEIKEFLFFEQFCKRLIERQTSWGLFGHSFFEKLTDMALSSLPNSIARIFPQWKKKNTFEFLFSLGTLVVDVERKVCFEHVLEEWGFEVVITDENAYLDPLSIFAINENFNEDRVDDGYLERIRLPFWNLNDYDLKRKRVNAYNILSYRFEEERKIESAQKGPNKMLQIEWYGIKEFKVDPFISNSITEFTLLEALLGKRIDPKKYSYSKQACTLSNYLTFLCAEGLDGFNLEEHLERRLKAAGHDVSDDEEEELTSAEQAGPIKILADPLGFMKECLEEIPIETEPSLEERGQFSTDYHSEKFEINYNDIFNPHNCMNTHGDEIPTPSDGNCFFSAFTETFEVERPDTLRSDFSDWLMEFNGGSYASLAEMIRPNGVFMEAELIYLFCVFRGVTLIIHDRTHEKENVYAVHRGFEEGHMVHRGNHFVGIETYNISTLTSDPLLGDIPCGFSEEITKFHFRPDHFNCAQFRGRKAAFITKVDADYGHNGMVYPHNSWVPSLEEIIQICGQGDDFNCALINFYEANSSLGFHRDNERVYNDDPILTVCTFGEGRFTIEFKDQVTSFLMTAGSFFLMPKGFQKKARHSVSNEMSRVSITFRKHVRRLNGSPIAIREENYKNTCLINAFSKAMKRSKQAIIAKLKTVNSPFWSRYLSEGNGGSIEDCQSACEALDVTVDLNVNGKCVVLGKGALRISMALRNNHFSVINAAQLMERTFVSHLLEKGNVNVLEGFDAMLSGDVGAAGVNKIQFAANFEFARILANSFLNMTTGICLGKALDNGEKYFLHILKDRVKQIGIDVTMVCGFAGSGKSRKLQSWLHSRKKGNFCVVSPRTNLAADWAFKLELEPNEQRKVSTFEKFIKTDKSKLDLIVIDELTLFPNGYLDLLVYELADVNRHCQIILLFDPLQARYHNKMDESILTFEHDVDRLIGGQNIEYIYSTHRMSRYFNRFFDVPCFNQADRTEEQRLWIFDDVYSIPSICSDRQEPCDVLLVESDLEKKAFSPIINVMTFGESQGLTFNHVCILLSESSAASNEFRWMVALTRARTRFSLCSTFLGGIEEFKVKRKESLITSILQGEKITFNRLNLMLKCNLIRREKENGCRDEVDREERLEGDPFLKPFIFLGQRVEKDEDEVEEVKIREPTCQTHLYITEPNFGLCYNFDFIREKEQREYREDMLVTNQFCDSYDKVHINGKRETPGPLRFKAIYPKHSADDDMTFWMAVRKRLVFREEEENYQRLSRAHLVGGLLYTNFKKKMGLEFTFDQGLLEESINAFEKKKLEKSCGTIKSHSIRSDIDWALNDVFLFMKSQLCTKYEKQFVDAKAGQTLACFQHLILVQFAPWCRYLETQIRNQLPEEIYIHSNKNFDDLNAWVKKFFQRDICVESDYEAFDASQDEYILSFEIHLMKDAHFPQKIIDAYIDLKCKLGCKLGHFSIMRFTGEFCTFLFNTLANMAFTMCRYEWRRGQPIAFAGDDMCALNNLAVCHDFDDLFELISLKAKVERTETPMFCGWRLTPYGIVKEPELVYNRFQVAIEEGKVLECLENYAIEVSYAYSLSERLYEVLKSERQVQYHQAVVRFIVTHIDKLKTKVRDLFLEQSSDEDI.

The region spanning 64-261 is the Alphavirus-like MT domain; sequence YPNGYLPHSH…YEQKLNMEWL (198 aa). Positions 683–794 constitute an OTU domain; sequence GDEIPTPSDG…GNHFVGIETY (112 aa). The Fe2OG dioxygenase domain maps to 874–963; sequence DFNCALINFY…RVSITFRKHV (90 aa). Positions 892, 894, and 946 each coordinate Fe cation. Arginine 954 is a binding site for 2-oxoglutarate. Positions 978–1067 constitute a Peptidase C23 domain; it reads YKNTCLINAF…LRNNHFSVIN (90 aa). Catalysis depends on residues cysteine 982 and histidine 1062. The region spanning 1122-1297 is the (+)RNA virus helicase ATP-binding domain; the sequence is NSFLNMTTGI…LIGGQNIEYI (176 aa). 1164 to 1171 contacts ATP; it reads GFAGSGKS. Residues 1298-1445 form the (+)RNA virus helicase C-terminal domain; it reads YSTHRMSRYF…GEKITFNRLN (148 aa). Residues 1739-1846 enclose the RdRp catalytic domain; sequence DICVESDYEA…LNNLAVCHDF (108 aa).

Requires Fe(2+) as cofactor. Post-translationally, specific enzymatic cleavages by the viral protease yield mature proteins.

The catalysed reaction is RNA(n) + a ribonucleoside 5'-triphosphate = RNA(n+1) + diphosphate. It carries out the reaction ATP + H2O = ADP + phosphate + H(+). In terms of biological role, RNA replication polyprotein: RNA-directed RNA polymerase involved in viral RNA replication. Protease: Thiol protease that cleaves the polyprotein. The polypeptide is RNA replication polyprotein (Citrus (CLBV)).